Reading from the N-terminus, the 169-residue chain is Putative phosphoesterase SACOL1020 (169 aa).

The active-site Proton donor is His-34. 2 consecutive short sequence motifs (HXTX) follow at residues 34-37 (HVTI) and 115-118 (HFTI). The Proton acceptor role is filled by His-115.

Belongs to the 2H phosphoesterase superfamily. YjcG family.

This chain is Putative phosphoesterase SACOL1020, found in Staphylococcus aureus (strain COL).